The chain runs to 360 residues: Peptide chain release factor 1 (360 aa).

Gln235 bears the N5-methylglutamine mark.

Belongs to the prokaryotic/mitochondrial release factor family. In terms of processing, methylated by PrmC. Methylation increases the termination efficiency of RF1.

The protein resides in the cytoplasm. Its function is as follows. Peptide chain release factor 1 directs the termination of translation in response to the peptide chain termination codons UAG and UAA. The sequence is that of Peptide chain release factor 1 from Burkholderia thailandensis (strain ATCC 700388 / DSM 13276 / CCUG 48851 / CIP 106301 / E264).